The following is a 418-amino-acid chain: Serine/threonine transporter SstT (418 aa).

9 helical membrane passes run 16 to 36 (SLVS…TLIP), 45 to 65 (LGTL…LLLV), 83 to 103 (LLIL…VASF), 142 to 162 (ALLE…GLSL), 192 to 212 (PLGI…SALL), 218 to 238 (LIVL…LIVF), 289 to 309 (VSIP…ITVL), 317 to 337 (LGIS…TISA), and 364 to 384 (VAMQ…SAET).

Belongs to the dicarboxylate/amino acid:cation symporter (DAACS) (TC 2.A.23) family.

It is found in the cell inner membrane. It catalyses the reaction L-serine(in) + Na(+)(in) = L-serine(out) + Na(+)(out). The catalysed reaction is L-threonine(in) + Na(+)(in) = L-threonine(out) + Na(+)(out). Its function is as follows. Involved in the import of serine and threonine into the cell, with the concomitant import of sodium (symport system). The sequence is that of Serine/threonine transporter SstT from Tolumonas auensis (strain DSM 9187 / NBRC 110442 / TA 4).